The sequence spans 495 residues: Major facilitator-type transporter hxnP (495 aa).

The tract at residues Met-1–Glu-24 is disordered. Transmembrane regions (helical) follow at residues Ser-36–Phe-55, Leu-84–Ile-104, Val-123–Ile-143, Ile-145–Phe-165, and Val-177–Phe-197. Asn-200 carries an N-linked (GlcNAc...) asparagine glycan. 5 helical membrane-spanning segments follow: residues Trp-209–Leu-229, Val-282–Val-302, Leu-314–Ser-334, Ser-341–Ile-361, and Gly-368–Val-388. Asn-395 is a glycosylation site (N-linked (GlcNAc...) asparagine). Transmembrane regions (helical) follow at residues Ala-404–Phe-424 and Leu-436–Trp-456.

Belongs to the major facilitator superfamily.

It is found in the cell membrane. In terms of biological role, major facilitator-type transporter, part of the hnx cluster involved in the purine degradation. The nicotinate hydroxylase hnxS accepts nicotinate as a substrate and catalyzes the first step of nicotinate catabolism. The major facilitator-type transporters hxnP and hxnZ are probably involved in the uptake of nicotinate-derived metabolites, and the oxidoreductases hxnT and hxnY in the further metabolism of 6-OH nicotinic acid. In Emericella nidulans (strain FGSC A4 / ATCC 38163 / CBS 112.46 / NRRL 194 / M139) (Aspergillus nidulans), this protein is Major facilitator-type transporter hxnP.